A 198-amino-acid chain; its full sequence is Ribosome maturation factor RimM (198 aa).

Positions 1 to 21 are disordered; the sequence is MPPPTASTPDDSADPGPDFAD. Residues 122–195 enclose the PRC barrel domain; that stretch reads DDELFADDLV…RIVVRPIDGL (74 aa).

It belongs to the RimM family. As to quaternary structure, binds ribosomal protein uS19.

The protein resides in the cytoplasm. Functionally, an accessory protein needed during the final step in the assembly of 30S ribosomal subunit, possibly for assembly of the head region. Essential for efficient processing of 16S rRNA. May be needed both before and after RbfA during the maturation of 16S rRNA. It has affinity for free ribosomal 30S subunits but not for 70S ribosomes. This chain is Ribosome maturation factor RimM, found in Salinibacter ruber (strain DSM 13855 / M31).